A 266-amino-acid chain; its full sequence is Amylovoran biosynthesis glycosyltransferase AmsE (266 aa).

It belongs to the glycosyltransferase 2 family.

It functions in the pathway glycan metabolism; exopolysaccharide biosynthesis. In terms of biological role, involved in the biosynthesis of amylovoran which functions as a virulence factor. The chain is Amylovoran biosynthesis glycosyltransferase AmsE (amsE) from Erwinia amylovora (Fire blight bacteria).